The primary structure comprises 429 residues: Adenylosuccinate synthetase (429 aa).

GTP-binding positions include 12–18 (GDEGKGK) and 40–42 (GHT). Aspartate 13 acts as the Proton acceptor in catalysis. Mg(2+) contacts are provided by aspartate 13 and glycine 40. IMP contacts are provided by residues 13-16 (DEGK), 38-41 (NAGH), threonine 128, arginine 142, glutamine 223, threonine 238, and arginine 302. The Proton donor role is filled by histidine 41. 298 to 304 (TVTKRPR) is a substrate binding site. Residues arginine 304, 330–332 (CLD), and 412–414 (SVG) contribute to the GTP site.

The protein belongs to the adenylosuccinate synthetase family. As to quaternary structure, homodimer. Requires Mg(2+) as cofactor.

It is found in the cytoplasm. It catalyses the reaction IMP + L-aspartate + GTP = N(6)-(1,2-dicarboxyethyl)-AMP + GDP + phosphate + 2 H(+). It functions in the pathway purine metabolism; AMP biosynthesis via de novo pathway; AMP from IMP: step 1/2. Its function is as follows. Plays an important role in the de novo pathway of purine nucleotide biosynthesis. Catalyzes the first committed step in the biosynthesis of AMP from IMP. The sequence is that of Adenylosuccinate synthetase from Lactiplantibacillus plantarum (strain ATCC BAA-793 / NCIMB 8826 / WCFS1) (Lactobacillus plantarum).